Consider the following 378-residue polypeptide: Probable tRNA sulfurtransferase (378 aa).

One can recognise a THUMP domain in the interval Asp51–Thr153. ATP-binding positions include Leu171–Met172, Ser196–Phe197, Arg253, Gly275, and Gln284.

This sequence belongs to the ThiI family.

Its subcellular location is the cytoplasm. The catalysed reaction is [ThiI sulfur-carrier protein]-S-sulfanyl-L-cysteine + a uridine in tRNA + 2 reduced [2Fe-2S]-[ferredoxin] + ATP + H(+) = [ThiI sulfur-carrier protein]-L-cysteine + a 4-thiouridine in tRNA + 2 oxidized [2Fe-2S]-[ferredoxin] + AMP + diphosphate. It catalyses the reaction [ThiS sulfur-carrier protein]-C-terminal Gly-Gly-AMP + S-sulfanyl-L-cysteinyl-[cysteine desulfurase] + AH2 = [ThiS sulfur-carrier protein]-C-terminal-Gly-aminoethanethioate + L-cysteinyl-[cysteine desulfurase] + A + AMP + 2 H(+). It functions in the pathway cofactor biosynthesis; thiamine diphosphate biosynthesis. Functionally, catalyzes the ATP-dependent transfer of a sulfur to tRNA to produce 4-thiouridine in position 8 of tRNAs, which functions as a near-UV photosensor. Also catalyzes the transfer of sulfur to the sulfur carrier protein ThiS, forming ThiS-thiocarboxylate. This is a step in the synthesis of thiazole, in the thiamine biosynthesis pathway. The sulfur is donated as persulfide by IscS. This is Probable tRNA sulfurtransferase from Mycoplasmopsis agalactiae (strain NCTC 10123 / CIP 59.7 / PG2) (Mycoplasma agalactiae).